We begin with the raw amino-acid sequence, 118 residues long: Large ribosomal subunit protein uL18 (118 aa).

Belongs to the universal ribosomal protein uL18 family. Part of the 50S ribosomal subunit; part of the 5S rRNA/L5/L18/L25 subcomplex. Contacts the 5S and 23S rRNAs.

This is one of the proteins that bind and probably mediate the attachment of the 5S RNA into the large ribosomal subunit, where it forms part of the central protuberance. This chain is Large ribosomal subunit protein uL18, found in Campylobacter concisus (strain 13826).